Here is a 341-residue protein sequence, read N- to C-terminus: HTH-type transcriptional repressor PurR (341 aa).

Positions A2–V56 constitute an HTH lacI-type domain. A DNA-binding region (H-T-H motif) is located at residues I4–N23. Residues S48–V56 mediate DNA binding. Residues Y73, R190, T192, F221, and D275 each contribute to the hypoxanthine site.

As to quaternary structure, homodimer.

The protein operates within purine metabolism; purine nucleotide biosynthesis [regulation]. In terms of biological role, is the main repressor of the genes involved in the de novo synthesis of purine nucleotides, regulating purB, purC, purEK, purF, purHD, purL, purMN and guaBA expression. PurR is allosterically activated to bind its cognate DNA by binding the purine corepressors, hypoxanthine or guanine, thereby effecting transcription repression. This chain is HTH-type transcriptional repressor PurR, found in Shigella sonnei (strain Ss046).